The chain runs to 349 residues: Aspartate carbamoyltransferase catalytic subunit (349 aa).

The carbamoyl phosphate site is built by Arg59 and Thr60. Lys87 provides a ligand contact to L-aspartate. Arg109, His142, and Gln145 together coordinate carbamoyl phosphate. 2 residues coordinate L-aspartate: Arg182 and Arg253. Residues Gly294 and Pro295 each contribute to the carbamoyl phosphate site.

This sequence belongs to the aspartate/ornithine carbamoyltransferase superfamily. ATCase family. Heterododecamer (2C3:3R2) of six catalytic PyrB chains organized as two trimers (C3), and six regulatory PyrI chains organized as three dimers (R2).

The enzyme catalyses carbamoyl phosphate + L-aspartate = N-carbamoyl-L-aspartate + phosphate + H(+). It participates in pyrimidine metabolism; UMP biosynthesis via de novo pathway; (S)-dihydroorotate from bicarbonate: step 2/3. In terms of biological role, catalyzes the condensation of carbamoyl phosphate and aspartate to form carbamoyl aspartate and inorganic phosphate, the committed step in the de novo pyrimidine nucleotide biosynthesis pathway. This chain is Aspartate carbamoyltransferase catalytic subunit, found in Synechococcus sp. (strain CC9311).